A 100-amino-acid polypeptide reads, in one-letter code: Urease subunit gamma (100 aa).

The protein belongs to the urease gamma subunit family. In terms of assembly, heterotrimer of UreA (gamma), UreB (beta) and UreC (alpha) subunits. Three heterotrimers associate to form the active enzyme.

It localises to the cytoplasm. It carries out the reaction urea + 2 H2O + H(+) = hydrogencarbonate + 2 NH4(+). It participates in nitrogen metabolism; urea degradation; CO(2) and NH(3) from urea (urease route): step 1/1. This is Urease subunit gamma from Micrococcus luteus (strain ATCC 4698 / DSM 20030 / JCM 1464 / CCM 169 / CCUG 5858 / IAM 1056 / NBRC 3333 / NCIMB 9278 / NCTC 2665 / VKM Ac-2230) (Micrococcus lysodeikticus).